A 95-amino-acid chain; its full sequence is Aspartyl/glutamyl-tRNA(Asn/Gln) amidotransferase subunit C (95 aa).

The protein belongs to the GatC family. Heterotrimer of A, B and C subunits.

The catalysed reaction is L-glutamyl-tRNA(Gln) + L-glutamine + ATP + H2O = L-glutaminyl-tRNA(Gln) + L-glutamate + ADP + phosphate + H(+). The enzyme catalyses L-aspartyl-tRNA(Asn) + L-glutamine + ATP + H2O = L-asparaginyl-tRNA(Asn) + L-glutamate + ADP + phosphate + 2 H(+). Functionally, allows the formation of correctly charged Asn-tRNA(Asn) or Gln-tRNA(Gln) through the transamidation of misacylated Asp-tRNA(Asn) or Glu-tRNA(Gln) in organisms which lack either or both of asparaginyl-tRNA or glutaminyl-tRNA synthetases. The reaction takes place in the presence of glutamine and ATP through an activated phospho-Asp-tRNA(Asn) or phospho-Glu-tRNA(Gln). The polypeptide is Aspartyl/glutamyl-tRNA(Asn/Gln) amidotransferase subunit C (Trichlorobacter lovleyi (strain ATCC BAA-1151 / DSM 17278 / SZ) (Geobacter lovleyi)).